Here is a 2357-residue protein sequence, read N- to C-terminus: Myosin-I heavy chain (2357 aa).

Residues Gln13 to Lys688 form the Myosin motor domain. Position 106 to 113 (Gly106 to Thr113) interacts with ATP. An actin-binding region spans residues Tyr579–Asn586. One can recognise an IQ domain in the interval Leu691–Ile720. A coiled-coil region spans residues Lys787–Asp891. Residues Lys787–Pro1076 are binding to talin A. 2 disordered regions span residues Ile797–Leu852 and Ala974–Pro1112. Composition is skewed to low complexity over residues Asn1003 to Ser1025 and Thr1078 to Asn1106. Residues Tyr1155–Lys1313 enclose the MyTH4 1 domain. In terms of domain architecture, FERM 1 spans Ile1318–Ala1620. One can recognise an SH3 domain in the interval Asn1618–Ser1678. The segment at Val1686–Ala1849 is disordered. Over residues Thr1706–Ser1733 the composition is skewed to pro residues. Low complexity-rich tracts occupy residues Val1734 to Leu1746 and Ser1755 to Met1770. The segment covering Phe1817–Thr1828 has biased composition (polar residues). One can recognise a MyTH4 2 domain in the interval Phe1894–Arg2051. Residues Ser2060–Gln2357 enclose the FERM 2 domain.

The protein belongs to the TRAFAC class myosin-kinesin ATPase superfamily. Myosin family. In terms of assembly, monomer. Interacts with talA.

The protein localises to the cytoplasm. Myosins are actin-based motor molecules with ATPase activity. Involved in the early steps of phagocytosis and adhesion. The protein is Myosin-I heavy chain (myoI) of Dictyostelium discoideum (Social amoeba).